A 258-amino-acid polypeptide reads, in one-letter code: Deoxyribose-phosphate aldolase (258 aa).

The active-site Proton donor/acceptor is the D102. Residue K165 is the Schiff-base intermediate with acetaldehyde of the active site. Residue K199 is the Proton donor/acceptor of the active site.

Belongs to the DeoC/FbaB aldolase family. DeoC type 2 subfamily.

It localises to the cytoplasm. The enzyme catalyses 2-deoxy-D-ribose 5-phosphate = D-glyceraldehyde 3-phosphate + acetaldehyde. It functions in the pathway carbohydrate degradation; 2-deoxy-D-ribose 1-phosphate degradation; D-glyceraldehyde 3-phosphate and acetaldehyde from 2-deoxy-alpha-D-ribose 1-phosphate: step 2/2. Its function is as follows. Catalyzes a reversible aldol reaction between acetaldehyde and D-glyceraldehyde 3-phosphate to generate 2-deoxy-D-ribose 5-phosphate. This is Deoxyribose-phosphate aldolase from Aliivibrio fischeri (strain ATCC 700601 / ES114) (Vibrio fischeri).